The primary structure comprises 197 residues: Imidazoleglycerol-phosphate dehydratase (197 aa).

This sequence belongs to the imidazoleglycerol-phosphate dehydratase family.

It is found in the cytoplasm. The enzyme catalyses D-erythro-1-(imidazol-4-yl)glycerol 3-phosphate = 3-(imidazol-4-yl)-2-oxopropyl phosphate + H2O. It participates in amino-acid biosynthesis; L-histidine biosynthesis; L-histidine from 5-phospho-alpha-D-ribose 1-diphosphate: step 6/9. In Rhodopseudomonas palustris (strain BisA53), this protein is Imidazoleglycerol-phosphate dehydratase.